Consider the following 328-residue polypeptide: Aryl-hydrocarbon-interacting protein-like 1 (328 aa).

The PPIase FKBP-type domain occupies 53–145 (KQVGHPMHII…DLDELQKEPQ (93 aa)). 3 TPR repeats span residues 178–211 (VPILHGEGNRLFKLGRYEEASNKYQEAIVCLRNL), 230–263 (NTLILNYCQCLLKKEEYYEVLEHTSDILRHHPGI), and 264–297 (VKAYYVRARAHAEVWNEAEAKADLEKVLELEPSM).

Directly interacts with NUB1.

The protein localises to the cytoplasm. It is found in the nucleus. Functionally, may be important in protein trafficking and/or protein folding and stabilization. This chain is Aryl-hydrocarbon-interacting protein-like 1 (AIPL1), found in Bos taurus (Bovine).